The primary structure comprises 191 residues: Peptide methionine sulfoxide reductase MsrA (191 aa).

Cys-21 is an active-site residue.

It belongs to the MsrA Met sulfoxide reductase family.

It catalyses the reaction L-methionyl-[protein] + [thioredoxin]-disulfide + H2O = L-methionyl-(S)-S-oxide-[protein] + [thioredoxin]-dithiol. The enzyme catalyses [thioredoxin]-disulfide + L-methionine + H2O = L-methionine (S)-S-oxide + [thioredoxin]-dithiol. Has an important function as a repair enzyme for proteins that have been inactivated by oxidation. Catalyzes the reversible oxidation-reduction of methionine sulfoxide in proteins to methionine. This chain is Peptide methionine sulfoxide reductase MsrA, found in Ralstonia nicotianae (strain ATCC BAA-1114 / GMI1000) (Ralstonia solanacearum).